Consider the following 283-residue polypeptide: NAD kinase (283 aa).

Residue aspartate 66 is the Proton acceptor of the active site. Residues 66 to 67 (DG), 137 to 138 (ND), arginine 165, aspartate 167, and 178 to 183 (TGYSLS) contribute to the NAD(+) site.

It belongs to the NAD kinase family. A divalent metal cation serves as cofactor.

Its subcellular location is the cytoplasm. The enzyme catalyses NAD(+) + ATP = ADP + NADP(+) + H(+). Its function is as follows. Involved in the regulation of the intracellular balance of NAD and NADP, and is a key enzyme in the biosynthesis of NADP. Catalyzes specifically the phosphorylation on 2'-hydroxyl of the adenosine moiety of NAD to yield NADP. This is NAD kinase from Chloroherpeton thalassium (strain ATCC 35110 / GB-78).